A 357-amino-acid chain; its full sequence is MRASPLAVPANAPSRKKRLELDDDLDTECPSQKQARSGPQPRLPSCPLTLNPPPAPVHAPDVTTPSRLGPYVLLEPEEGSRTYRALHCPTGTEYICKVYPACERLAVLEPYWRLPHHGHVARPAEVLAGTQLLYAFFLRPHGDMHSLVRRRRRLPEPEAAALFRQMAAALAHCHQHGLVLRDLKLRRFVFTDRERTKLVLENLEDACVLTGPDDSLWDKHACPAYVGPEILSSRASYSGKAADVWSLGVALFTMLAGHYPFQDSEPALLFGKIRRGAFALPEGLSAPARCLVRCLLRREPTERLTASGILLHPWLRENAIPAALPRSRHCEADQVVPEGPGLEEAEEEGERDMGLYG.

The interval 1–63 (MRASPLAVPA…PAPVHAPDVT (63 aa)) is disordered. Residues 1–127 (MRASPLAVPA…GHVARPAEVL (127 aa)) form an interaction with DDIT3/CHOP region. Positions 68–316 (LGPYVLLEPE…SGILLHPWLR (249 aa)) constitute a Protein kinase domain. Positions 333–357 (DQVVPEGPGLEEAEEEGERDMGLYG) are disordered. The span at 341–350 (GLEEAEEEGE) shows a compositional bias: acidic residues.

It belongs to the protein kinase superfamily. CAMK Ser/Thr protein kinase family. Tribbles subfamily. In terms of assembly, interacts with AKT1, AKT2, MAP2K1 and MAP2K7. Interacts with ATF4. Interacts with DDIT3/CHOP and inhibits its interaction with EP300/P300. Interacts with APOBEC3C. Interacts (via N-terminus) with APOBEC3A. Interacts with RELA.

Its subcellular location is the nucleus. Functionally, inactive protein kinase which acts as a regulator of the integrated stress response (ISR), a process for adaptation to various stress. Inhibits the transcriptional activity of DDIT3/CHOP and is involved in DDIT3/CHOP-dependent cell death during ER stress. May play a role in programmed neuronal cell death but does not appear to affect non-neuronal cells. Acts as a negative feedback regulator of the ATF4-dependent transcription during the ISR: while TRIB3 expression is promoted by ATF4, TRIB3 protein interacts with ATF4 and inhibits ATF4 transcription activity. Disrupts insulin signaling by binding directly to Akt kinases and blocking their activation. May bind directly to and mask the 'Thr-308' phosphorylation site in AKT1. Interacts with the NF-kappa-B transactivator p65 RELA and inhibits its phosphorylation and thus its transcriptional activation activity. Interacts with MAPK kinases and regulates activation of MAP kinases. Can inhibit APOBEC3A editing of nuclear DNA. The chain is Tribbles homolog 3 (TRIB3) from Bos taurus (Bovine).